A 471-amino-acid chain; its full sequence is Alpha-1,3/1,6-mannosyltransferase alg-2 (471 aa).

2 N-linked (GlcNAc...) asparagine glycosylation sites follow: asparagine 178 and asparagine 279. The chain crosses the membrane as a helical span at residues 446 to 466; sequence GMILLVVGAAVAAVAGVISAV.

The protein belongs to the glycosyltransferase group 1 family. Glycosyltransferase 4 subfamily.

The protein localises to the endoplasmic reticulum membrane. It catalyses the reaction a beta-D-Man-(1-&gt;4)-beta-D-GlcNAc-(1-&gt;4)-alpha-D-GlcNAc-diphospho-di-trans,poly-cis-dolichol + GDP-alpha-D-mannose = an alpha-D-Man-(1-&gt;3)-beta-D-Man-(1-&gt;4)-beta-D-GlcNAc-(1-&gt;4)-alpha-D-GlcNAc-diphospho-di-trans,poly-cis-dolichol + GDP + H(+). The enzyme catalyses an alpha-D-Man-(1-&gt;3)-beta-D-Man-(1-&gt;4)-beta-D-GlcNAc-(1-&gt;4)-alpha-D-GlcNAc-diphospho-di-trans,poly-cis-dolichol + GDP-alpha-D-mannose = an alpha-D-Man-(1-&gt;3)-[alpha-D-Man-(1-&gt;6)]-beta-D-Man-(1-&gt;4)-beta-D-GlcNAc-(1-&gt;4)-alpha-D-GlcNAc-diphospho-di-trans,poly-cis-dolichol + GDP + H(+). It participates in protein modification; protein glycosylation. Its function is as follows. Mannosylates Man(2)GlcNAc(2)-dolichol diphosphate and Man(1)GlcNAc(2)-dolichol diphosphate to form Man(3)GlcNAc(2)-dolichol diphosphate. The protein is Alpha-1,3/1,6-mannosyltransferase alg-2 (alg-2) of Neurospora crassa (strain ATCC 24698 / 74-OR23-1A / CBS 708.71 / DSM 1257 / FGSC 987).